Reading from the N-terminus, the 304-residue chain is Ribosomal RNA small subunit methyltransferase H (304 aa).

S-adenosyl-L-methionine-binding positions include 47–49 (GGH), D66, F93, D108, and Q115.

This sequence belongs to the methyltransferase superfamily. RsmH family.

Its subcellular location is the cytoplasm. The catalysed reaction is cytidine(1402) in 16S rRNA + S-adenosyl-L-methionine = N(4)-methylcytidine(1402) in 16S rRNA + S-adenosyl-L-homocysteine + H(+). Functionally, specifically methylates the N4 position of cytidine in position 1402 (C1402) of 16S rRNA. This is Ribosomal RNA small subunit methyltransferase H from Prochlorococcus marinus (strain NATL1A).